A 292-amino-acid polypeptide reads, in one-letter code: uncharacterized protein (292 aa).

It belongs to the glycosyltransferase 2 family. WaaE/KdtX subfamily.

This is an uncharacterized protein from Rickettsia typhi (strain ATCC VR-144 / Wilmington).